Consider the following 321-residue polypeptide: Probable cell division protein WhiA (321 aa).

A DNA-binding region (H-T-H motif) is located at residues 275–308 (SLDELGRLADPPMTKDAVAGRIRRLLAMADKRAA).

It belongs to the WhiA family.

Its function is as follows. Involved in cell division and chromosome segregation. The polypeptide is Probable cell division protein WhiA (Micrococcus luteus (strain ATCC 4698 / DSM 20030 / JCM 1464 / CCM 169 / CCUG 5858 / IAM 1056 / NBRC 3333 / NCIMB 9278 / NCTC 2665 / VKM Ac-2230) (Micrococcus lysodeikticus)).